We begin with the raw amino-acid sequence, 423 residues long: G2/mitotic-specific cyclin-B1 (423 aa).

Phosphoserine; by CDK1 is present on Ser-116. Ser-118 carries the phosphoserine modification. Ser-123 is modified (phosphoserine; by PLK1). At Ser-137 the chain carries Phosphoserine. Interaction with CDK2 regions lie at residues 159 to 167 (EYVKDIYAY) and 248 to 251 (YEEM). Phosphothreonine is present on Thr-311.

The protein belongs to the cyclin family. Cyclin AB subfamily. Interacts with the CDC2 protein kinase to form a serine/threonine kinase holoenzyme complex also known as maturation promoting factor (MPF). The cyclin subunit imparts substrate specificity to the complex. Binds HEI10. Interacts with catalytically active RALBP1 and CDC2 during mitosis to form an endocytotic complex during interphase. Interacts with CCNF; interaction is required for nuclear localization. Interacts with CDK5RAP3. Interacts with RFPL4A and UBE2A. Interacts with INCA1. Ubiquitinated by the SCF(NIPA) complex during interphase, leading to its destruction. Deubiquitinated by USP22 during G2/M phase. In terms of processing, phosphorylated by PLK1 at Ser-123 on centrosomes during prophase: phosphorylation by PLK1 does not cause nuclear import. Phosphorylation at Ser-137 was also reported to be mediated by PLK1 but Ser-123 seems to be the primary phosphorylation site.

The protein resides in the cytoplasm. It localises to the nucleus. The protein localises to the cytoskeleton. It is found in the microtubule organizing center. Its subcellular location is the centrosome. Functionally, essential for the control of the cell cycle at the G2/M (mitosis) transition. In Rattus norvegicus (Rat), this protein is G2/mitotic-specific cyclin-B1 (Ccnb1).